We begin with the raw amino-acid sequence, 555 residues long: MEPVTKWSPKQVVDWTRGLDDCLQQYVHKFEREKINGEQLLQISHQDLEELGVTRIGHQELVLEAVDLLCALNYGLETDNMKNLVLKLRASSHNLQNYISSRRKSPAYDGNTSRKAPNEFLTSVVELIGAAKALLAWLDRAPFTGITDFSVTKNKIIQLCLDLTTTVQKDCFVAEMEDKVLTVVKVLNGICDKTIRSTTDPVMSQCACLEEVHLPNIKPGEGLGMYIKSTYDGLHVITGTTENSPADRSQKIHAGDEVIQVNQQTVVGWQLKNLVKKLRENPTGVVLLLKKRPTGSFNFTPAPLKNLRWKPPLVQTSPPPATTQSPESTMDTSLKKEKSAILDLYIPPPPAVPYSPRDENGSFVYGGSSKCKQPLPGPKGSESPNSFLDQESRRRRFTIADSDQLPGYSVETNILPTKMREKTPSYGKPRPLSMPADGNWMGIVDPFARPRGHGRKGEDALCRYFSNERIPPIIEESSSPPYRFSRPTTERHLVRGADYIRGSRCYINSDLHSSATIPFQEEGTKKKSGSSATKSSSTEPSLLVSWFTRLKLLTH.

Residues 7–72 (WSPKQVVDWT…LEAVDLLCAL (66 aa)) enclose the SAM domain. A CRIC domain is found at 80 to 174 (NMKNLVLKLR…TTVQKDCFVA (95 aa)). The region spanning 211-293 (EVHLPNIKPG…GVVLLLKKRP (83 aa)) is the PDZ domain. 3 disordered regions span residues 309 to 334 (WKPP…DTSL), 347 to 390 (PPPP…FLDQ), and 517 to 537 (IPFQ…KSSS). Residues 325 to 546 (SPESTMDTSL…STEPSLLVSW (222 aa)) form the DUF1170 domain. Ser381 and Ser383 each carry phosphoserine.

It belongs to the CNKSR family. Interacts with epithelial sodium channel ENaC. Interacts directly with SCNN1A (ENaC subunit alpha) and SCNN1B (ENaC subunit beta) C-terminal tails. Interacts with ENaC regulatory proteins NEDD4L, RAF1 and SGK1.

It is found in the cytoplasm. It localises to the apical cell membrane. Involved in transepithelial sodium transport. Regulates aldosterone-induced and epithelial sodium channel (ENaC)-mediated sodium transport through regulation of ENaC cell surface expression. Acts as a scaffold protein coordinating the assembly of an ENaC-regulatory complex (ERC). This Homo sapiens (Human) protein is Connector enhancer of kinase suppressor of ras 3 (CNKSR3).